Reading from the N-terminus, the 267-residue chain is UPF0173 metal-dependent hydrolase THEYE_A0282 (267 aa).

The protein belongs to the UPF0173 family.

This is UPF0173 metal-dependent hydrolase THEYE_A0282 from Thermodesulfovibrio yellowstonii (strain ATCC 51303 / DSM 11347 / YP87).